The sequence spans 195 residues: 3-isopropylmalate dehydratase small subunit (195 aa).

It belongs to the LeuD family. LeuD type 1 subfamily. As to quaternary structure, heterodimer of LeuC and LeuD.

The catalysed reaction is (2R,3S)-3-isopropylmalate = (2S)-2-isopropylmalate. Its pathway is amino-acid biosynthesis; L-leucine biosynthesis; L-leucine from 3-methyl-2-oxobutanoate: step 2/4. Its function is as follows. Catalyzes the isomerization between 2-isopropylmalate and 3-isopropylmalate, via the formation of 2-isopropylmaleate. The sequence is that of 3-isopropylmalate dehydratase small subunit from Parafrankia sp. (strain EAN1pec).